We begin with the raw amino-acid sequence, 644 residues long: Core protein VP4 (644 aa).

The protein belongs to the orbivirus VP4 family.

It localises to the virion. Functionally, the VP4 protein is one of the five proteins (with VP1, VP3, VP6 and VP7) which form the inner capsid of the virus. The chain is Core protein VP4 (Segment-4) from Bluetongue virus 11 (isolate USA) (BTV 11).